The sequence spans 69 residues: Cytochrome b-c1 complex subunit 6-1, mitochondrial (69 aa).

Cystine bridges form between cysteine 17/cysteine 59 and cysteine 31/cysteine 45.

This sequence belongs to the UQCRH/QCR6 family. In terms of assembly, component of the ubiquinol-cytochrome c oxidoreductase (cytochrome b-c1 complex, complex III, CIII), a multisubunit enzyme composed of 10 subunits. The complex is composed of 3 respiratory subunits cytochrome b (MT-CYB), cytochrome c1 (CYC1-1 or CYC1-2) and Rieske protein (UCR1-1 or UCR1-2), 2 core protein subunits MPPalpha1 (or MPPalpha2) and MPPB, and 5 low-molecular weight protein subunits QCR7-1 (or QCR7-2), UCRQ-1 (or UCRQ-2), QCR9, UCRY and probably QCR6-1 (or QCR6-2). The complex exists as an obligatory dimer and forms supercomplexes (SCs) in the inner mitochondrial membrane with NADH-ubiquinone oxidoreductase (complex I, CI), resulting in different assemblies (supercomplexes SCI(1)III(2) and SCI(2)III(4)).

It localises to the mitochondrion inner membrane. In terms of biological role, component of the ubiquinol-cytochrome c oxidoreductase, a multisubunit transmembrane complex that is part of the mitochondrial electron transport chain which drives oxidative phosphorylation. The respiratory chain contains 3 multisubunit complexes succinate dehydrogenase (complex II, CII), ubiquinol-cytochrome c oxidoreductase (cytochrome b-c1 complex, complex III, CIII) and cytochrome c oxidase (complex IV, CIV), that cooperate to transfer electrons derived from NADH and succinate to molecular oxygen, creating an electrochemical gradient over the inner membrane that drives transmembrane transport and the ATP synthase. The cytochrome b-c1 complex catalyzes electron transfer from ubiquinol to cytochrome c, linking this redox reaction to translocation of protons across the mitochondrial inner membrane, with protons being carried across the membrane as hydrogens on the quinol. In the process called Q cycle, 2 protons are consumed from the matrix, 4 protons are released into the intermembrane space and 2 electrons are passed to cytochrome c. The chain is Cytochrome b-c1 complex subunit 6-1, mitochondrial (QCR6-1) from Arabidopsis thaliana (Mouse-ear cress).